The chain runs to 142 residues: MARYKLLLLLAVWVLTGELWPGAEARAAPYGVRLCGREFIRAVIFTCGGSRWRRSDILAHEAMGDTFPDADADGDSLAGELDEAMGSSEWLALTKSPQAFYRGRPSWQGTPGALRGSRDVLAGLSSSCCKWGCSKSEISSLC.

Residues 1-25 (MARYKLLLLLAVWVLTGELWPGAEA) form the signal peptide. Cystine bridges form between Cys-35–Cys-129, Cys-47–Cys-142, and Cys-128–Cys-133. Residues 55–118 (SDILAHEAMG…GTPGALRGSR (64 aa)) constitute a propeptide, connecting peptide.

Belongs to the insulin family. Heterodimer of a B chain and an A chain linked by two disulfide bonds.

It localises to the secreted. Its function is as follows. May play a role in neuropeptide signaling processes. Ligand for LGR7, RXFP3 and RXFP4. The protein is Relaxin-3 (RLN3) of Pan troglodytes (Chimpanzee).